The primary structure comprises 1082 residues: uncharacterized protein (1082 aa).

In terms of domain architecture, PNPLA spans 50–319 (TTMTGGVSLA…LDNRPIGVLF (270 aa)). The GXSXG motif lies at 120 to 124 (GTSAG). Ser122 (nucleophile) is an active-site residue. Asp306 serves as the catalytic Proton acceptor. A DGA/G motif is present at residues 306–308 (DGG). The next 4 helical transmembrane spans lie at 959-979 (IARS…AAAI), 982-1002 (VTVF…LVVL), 1012-1032 (LFAL…TPVV), and 1057-1077 (WWHP…IAAA).

Its subcellular location is the cell membrane. This is an uncharacterized protein from Mycobacterium tuberculosis (strain ATCC 25618 / H37Rv).